The sequence spans 38 residues: Large ribosomal subunit protein bL36 (38 aa).

It belongs to the bacterial ribosomal protein bL36 family.

In Pseudoalteromonas atlantica (strain T6c / ATCC BAA-1087), this protein is Large ribosomal subunit protein bL36.